A 486-amino-acid chain; its full sequence is N-succinylglutamate 5-semialdehyde dehydrogenase (486 aa).

220-225 (GSSRTG) is a binding site for NAD(+). Catalysis depends on residues glutamate 243 and cysteine 277.

The protein belongs to the aldehyde dehydrogenase family. AstD subfamily.

It carries out the reaction N-succinyl-L-glutamate 5-semialdehyde + NAD(+) + H2O = N-succinyl-L-glutamate + NADH + 2 H(+). It participates in amino-acid degradation; L-arginine degradation via AST pathway; L-glutamate and succinate from L-arginine: step 4/5. Catalyzes the NAD-dependent reduction of succinylglutamate semialdehyde into succinylglutamate. The chain is N-succinylglutamate 5-semialdehyde dehydrogenase from Shewanella baltica (strain OS155 / ATCC BAA-1091).